The sequence spans 55 residues: Preprotein translocase subunit SecG (55 aa).

The Cytoplasmic portion of the chain corresponds to 1 to 31 (MPKNNTNENFQSGAGLIRYFNEEEIKGPALD). The chain crosses the membrane as a helical span at residues 32–51 (PKLIIYIGIAMAVIVELAKI). The Extracellular portion of the chain corresponds to 52–55 (FWPV).

Belongs to the SEC61-beta family. In terms of assembly, component of the protein translocase complex. Heterotrimer consisting of alpha (SecY), beta (SecG) and gamma (SecE) subunits. Can form oligomers of the heterotrimer.

The protein localises to the cell membrane. Functionally, involved in protein export. The function of the beta subunit is unknown, but it may be involved in stabilization of the trimeric complex. The chain is Preprotein translocase subunit SecG from Picrophilus torridus (strain ATCC 700027 / DSM 9790 / JCM 10055 / NBRC 100828 / KAW 2/3).